The sequence spans 382 residues: Lycopene beta-cyclase (382 aa).

6–36 contacts NAD(+); that stretch reads DLILVGAGLANGLIALRLQQQQPDMRILLID.

The protein belongs to the lycopene cyclase family. Requires FAD as cofactor.

The protein resides in the cell inner membrane. The catalysed reaction is a carotenoid psi-end group = a carotenoid beta-end derivative. It catalyses the reaction all-trans-lycopene = gamma-carotene. The enzyme catalyses gamma-carotene = all-trans-beta-carotene. It carries out the reaction all-trans-neurosporene = beta-zeacarotene. The catalysed reaction is beta-zeacarotene = 7,8-dihydro-beta-carotene. The protein operates within carotenoid biosynthesis; beta-carotene biosynthesis. Activity is increased in the presence of NAD(P)H. NADPH is not involved directly in the cyclization reaction, but must play an indirect role, e.g. as an allosteric activator. Catalyzes the double cyclization reaction which converts lycopene to beta-carotene. Also catalyzes the double cyclization reaction which converts neurosporene to 7,8-dihydro-beta-carotene via monocyclic beta-zeacarotene. May also convert zeta-carotene to bicyclic 7,8,7',8'-tetrahydro-beta-carotene. The sequence is that of Lycopene beta-cyclase from Pantoea ananas (Erwinia uredovora).